Reading from the N-terminus, the 232-residue chain is dTTP/UTP pyrophosphatase (232 aa).

The active-site Proton acceptor is Asp-103.

The protein belongs to the Maf family. YhdE subfamily. The cofactor is a divalent metal cation.

It localises to the cytoplasm. It carries out the reaction dTTP + H2O = dTMP + diphosphate + H(+). The catalysed reaction is UTP + H2O = UMP + diphosphate + H(+). In terms of biological role, nucleoside triphosphate pyrophosphatase that hydrolyzes dTTP and UTP. May have a dual role in cell division arrest and in preventing the incorporation of modified nucleotides into cellular nucleic acids. The protein is dTTP/UTP pyrophosphatase of Bartonella henselae (strain ATCC 49882 / DSM 28221 / CCUG 30454 / Houston 1) (Rochalimaea henselae).